The chain runs to 312 residues: MEAGNQTGFLEFILLGLSEDPELQPFIFGLFLSMYLVTVLGNLLIILAISSDSHLHTPMYFFLSNLSWVDICFSTCIVPKMLVNIQTENKAISYMDCLTQVYFSMFFPILDTLLLTVMAYDRFVAVCHPLHYMIIMNPHLCGLLVFVTWLIGVMTSLLHISLMMHLIFCKDFEIPHFFCELTYILQLACSDTFLNSTLIYFMTGVLGVFPLLGIIFSYSRIASSIRKMSSSGGKQKALSTCGSHLSVVSLFYGTGIGVHFTSAVTHSSQKISVASVMYTVVTPMLNPFIYSLRNKDVKGALGSLLSRAASCL.

Residues 1-25 are Extracellular-facing; sequence MEAGNQTGFLEFILLGLSEDPELQP. An N-linked (GlcNAc...) asparagine glycan is attached at Asn-5. The chain crosses the membrane as a helical span at residues 26 to 46; the sequence is FIFGLFLSMYLVTVLGNLLII. Over 47–54 the chain is Cytoplasmic; that stretch reads LAISSDSH. Residues 55–75 traverse the membrane as a helical segment; sequence LHTPMYFFLSNLSWVDICFST. The Extracellular segment spans residues 76-99; it reads CIVPKMLVNIQTENKAISYMDCLT. A disulfide bridge links Cys-97 with Cys-189. The chain crosses the membrane as a helical span at residues 100–120; it reads QVYFSMFFPILDTLLLTVMAY. The Cytoplasmic segment spans residues 121–139; that stretch reads DRFVAVCHPLHYMIIMNPH. Residues 140 to 160 form a helical membrane-spanning segment; it reads LCGLLVFVTWLIGVMTSLLHI. The Extracellular portion of the chain corresponds to 161–197; sequence SLMMHLIFCKDFEIPHFFCELTYILQLACSDTFLNST. Residues 198-217 traverse the membrane as a helical segment; the sequence is LIYFMTGVLGVFPLLGIIFS. The Cytoplasmic portion of the chain corresponds to 218 to 237; that stretch reads YSRIASSIRKMSSSGGKQKA. Residues 238 to 258 traverse the membrane as a helical segment; it reads LSTCGSHLSVVSLFYGTGIGV. Residues 259–271 lie on the Extracellular side of the membrane; it reads HFTSAVTHSSQKI. Residues 272-292 form a helical membrane-spanning segment; the sequence is SVASVMYTVVTPMLNPFIYSL. At 293 to 312 the chain is on the cytoplasmic side; it reads RNKDVKGALGSLLSRAASCL.

It belongs to the G-protein coupled receptor 1 family.

It localises to the cell membrane. In terms of biological role, odorant receptor. In Homo sapiens (Human), this protein is Olfactory receptor 7D2 (OR7D2).